Consider the following 238-residue polypeptide: Ribonuclease M (238 aa).

Intrachain disulfides connect Cys5–Cys22, Cys13–Cys58, Cys21–Cys126, Cys66–Cys118, and Cys191–Cys225. Residue His51 is part of the active site. Asn74 carries an N-linked (GlcNAc...) asparagine glycan. Catalysis depends on residues Glu111 and His115.

Belongs to the RNase T2 family.

The catalysed reaction is a ribonucleotidyl-ribonucleotide-RNA + H2O = a 3'-end 3'-phospho-ribonucleotide-RNA + a 5'-end dephospho-ribonucleoside-RNA + H(+). Functionally, this is a base non-specific and adenylic acid preferential ribonuclease. The polypeptide is Ribonuclease M (Aspergillus phoenicis (Aspergillus saitoi)).